The primary structure comprises 318 residues: Myoblast determination protein 1 (318 aa).

Met1 is covalently cross-linked (Peptide (Met-Gly) (interchain with G-Cter in ubiquitin)). Lys104 carries the N6-methyllysine; by EHMT2 modification. One can recognise a bHLH domain in the interval 109–160; that stretch reads DRRKAATMRERRRLSKVNEAFETLKRCTSSNPNQRLPKVEILRNAIRYIEGL. 2 disordered regions span residues 174–224 and 266–318; these read AAAA…RRRN and APAL…YQVL. Residues 197 to 207 are compositionally biased toward polar residues; it reads SDASSPRSNCS. Residues 266–276 show a composition bias toward low complexity; sequence APALLLADAPP.

As to quaternary structure, efficient DNA binding requires dimerization with another bHLH protein. Seems to form active heterodimers with ITF-2. Interacts with SUV39H1. Interacts with DDX5. Interacts with CHD2. Interacts with TSC22D3. Interacts with SETD3. Interacts with P-TEFB complex; promotes the transcriptional activity of MYOD1 through its CDK9-mediated phosphorylation. Interacts with CSRP3. Interacts with NUPR1. Post-translationally, phosphorylated by CDK9. This phosphorylation promotes its function in muscle differentiation. In terms of processing, acetylated by a complex containing EP300 and PCAF. The acetylation is essential to activate target genes. Conversely, its deacetylation by SIRT1 inhibits its function. Ubiquitinated on the N-terminus; which is required for proteasomal degradation. Post-translationally, methylation at Lys-104 by EHMT2/G9a inhibits myogenic activity.

The protein localises to the nucleus. In terms of biological role, acts as a transcriptional activator that promotes transcription of muscle-specific target genes and plays a role in muscle differentiation. Together with MYF5 and MYOG, co-occupies muscle-specific gene promoter core region during myogenesis. Induces fibroblasts to differentiate into myoblasts. Interacts with and is inhibited by the twist protein. This interaction probably involves the basic domains of both proteins. The protein is Myoblast determination protein 1 (MYOD1) of Bos taurus (Bovine).